A 521-amino-acid chain; its full sequence is MSL complex subunit 3 (521 aa).

The region spanning 13-71 (SGEKVLCFEPDPTKARVLYDAKIVDVIVGKDEKGRKIPEYLIHFNGWNRSWDRWAAEDH) is the Tudor-knot domain. Disordered regions lie at residues 114–166 (KGLP…TRRE) and 298–409 (ATST…PSKE). Residues 139–149 (KDEEISEESDI) are compositionally biased toward acidic residues. Residues 150-166 (EEKTEVKEEPELQTRRE) show a composition bias toward basic and acidic residues. The region spanning 168-517 (EERTITIEIP…CEAHYSTKNP (350 aa)) is the MRG domain. Residues 290 to 440 (FFLPIKESAT…WKLVPDNYPP (151 aa)) form a required for the histone acetyltransferase activity of the MSL complex region. Phosphoserine is present on residues S309 and S311. Residues 316 to 329 (NPSTPQSTESQPTT) are compositionally biased toward low complexity. A phosphoserine mark is found at S367 and S400. T405 is subject to Phosphothreonine. 2 positions are modified to phosphoserine: S407 and S411.

As to quaternary structure, component of the MSL histone acetyltransferase complex at least composed of the KAT8/MOF, MSL1/hampin, MSL2 and MSL3. Interacts (via the MRG domain) with MSL1 and KAT8/MOF. In terms of tissue distribution, expressed in many tissues including liver, pancreas, heart, lung, kidney, skeletal muscle, brain, and placenta, with highest expression in skeletal muscle and heart.

It localises to the nucleus. Functionally, non-catalytic component of the MSL histone acetyltransferase complex, a multiprotein complex that mediates the majority of histone H4 acetylation at 'Lys-16' (H4K16ac), an epigenetic mark that prevents chromatin compaction. The MSL complex is required for chromosome stability and genome integrity by maintaining homeostatic levels of H4K16ac. The MSL complex is also involved in gene dosage by promoting up-regulation of genes expressed by the X chromosome. X up-regulation is required to compensate for autosomal biallelic expression. The MSL complex also participates in gene dosage compensation by promoting expression of Tsix non-coding RNA. Acts as a histone reader that specifically recognizes and binds histone H4 monomethylated at 'Lys-20' (H4K20Me1) in a DNA-dependent manner and is proposed to be involved in chromosomal targeting of the MSL complex. May play a role X inactivation in females. The polypeptide is MSL complex subunit 3 (Homo sapiens (Human)).